Reading from the N-terminus, the 467-residue chain is Light-independent protochlorophyllide reductase subunit N (467 aa).

Residues C22, C47, and C107 each contribute to the [4Fe-4S] cluster site.

Belongs to the BchN/ChlN family. In terms of assembly, protochlorophyllide reductase is composed of three subunits; ChlL, ChlN and ChlB. Forms a heterotetramer of two ChlB and two ChlN subunits. The cofactor is [4Fe-4S] cluster.

The protein localises to the plastid. Its subcellular location is the chloroplast. It catalyses the reaction chlorophyllide a + oxidized 2[4Fe-4S]-[ferredoxin] + 2 ADP + 2 phosphate = protochlorophyllide a + reduced 2[4Fe-4S]-[ferredoxin] + 2 ATP + 2 H2O. Its pathway is porphyrin-containing compound metabolism; chlorophyll biosynthesis (light-independent). In terms of biological role, component of the dark-operative protochlorophyllide reductase (DPOR) that uses Mg-ATP and reduced ferredoxin to reduce ring D of protochlorophyllide (Pchlide) to form chlorophyllide a (Chlide). This reaction is light-independent. The NB-protein (ChlN-ChlB) is the catalytic component of the complex. The sequence is that of Light-independent protochlorophyllide reductase subunit N from Chara vulgaris (Common stonewort).